Reading from the N-terminus, the 127-residue chain is MLSRKAVAALLLVHVTAMLASQTEGFVPIFTYSELRRTQEREQNKRLRKSLRVQQRSKAAGRLEPQEVMEEEENGVIKLTAPVEIGVGLSSRQLEKHRAVLEALLSEALPPPSLVFGGQRPVTAAWE.

The first 25 residues, methionine 1–glycine 25, serve as a signal peptide directing secretion. Positions arginine 41 to glutamate 67 are disordered.

Belongs to the motilin family. In terms of tissue distribution, present in the gut mucosa with the exception of the gastric corpus. Also present in medulla oblongata, nucleus of the solitary tract, hypophysis, spinal cord, hypothalamus, and cerebellum but not in the cerebral cortex.

The protein resides in the secreted. Functionally, plays an important role in the regulation of interdigestive gastrointestinal motility and indirectly causes rhythmic contraction of duodenal and colonic smooth muscle. This chain is Promotilin (MLN), found in Cavia porcellus (Guinea pig).